A 185-amino-acid polypeptide reads, in one-letter code: NAD(P)H-dependent FAD/FMN reductase GTNG_3158 (185 aa).

In terms of assembly, anthranilate 3-monooxygenase consists of a reductase component (GTNG_3158) and an oxygenase component HpaH.

The enzyme catalyses FADH2 + NAD(+) = FAD + NADH + 2 H(+). The catalysed reaction is FADH2 + NADP(+) = FAD + NADPH + 2 H(+). In terms of biological role, involved in the pathway of tryptophan degradation. Reduces FAD/FMN to FADH(2)/FMNH(2), which are subsequently used for the hydroxylation of anthranilate. It can reduce either FAD or flavin mononucleotide (FMN) but prefers FAD. The enzyme has a slight preference for NADPH as acceptor. The sequence is that of NAD(P)H-dependent FAD/FMN reductase GTNG_3158 from Geobacillus thermodenitrificans (strain NG80-2).